The primary structure comprises 342 residues: Ribosomal RNA small subunit methyltransferase H (342 aa).

S-adenosyl-L-methionine contacts are provided by residues 36-38, D56, F82, D100, and Q107; that span reads GGH. A disordered region spans residues 309 to 342; the sequence is ENRESGMGKGHGAAASRFPTPDSRFPTSPNGDAP. A compositionally biased stretch (polar residues) spans 333–342; the sequence is FPTSPNGDAP.

The protein belongs to the methyltransferase superfamily. RsmH family.

The protein resides in the cytoplasm. The enzyme catalyses cytidine(1402) in 16S rRNA + S-adenosyl-L-methionine = N(4)-methylcytidine(1402) in 16S rRNA + S-adenosyl-L-homocysteine + H(+). In terms of biological role, specifically methylates the N4 position of cytidine in position 1402 (C1402) of 16S rRNA. The sequence is that of Ribosomal RNA small subunit methyltransferase H from Xanthomonas campestris pv. campestris (strain B100).